The following is a 452-amino-acid chain: Bifunctional protein GlmU (452 aa).

The pyrophosphorylase stretch occupies residues 1–231 (MSRTCLAVIL…EAELAGCNNR (231 aa)). UDP-N-acetyl-alpha-D-glucosamine is bound by residues 10-13 (LAAG), Lys-24, Gln-77, 82-83 (GT), 105-107 (YGD), Gly-143, Glu-157, Asn-172, and Asn-229. Asp-107 lines the Mg(2+) pocket. Asn-229 contributes to the Mg(2+) binding site. The tract at residues 232 to 252 (AELAVIEKLWQERRRHELMLS) is linker. An N-acetyltransferase region spans residues 253-452 (GVSMIAPETV…MAIKAFSGKV (200 aa)). Positions 318 and 336 each coordinate UDP-N-acetyl-alpha-D-glucosamine. The active-site Proton acceptor is His-348. UDP-N-acetyl-alpha-D-glucosamine contacts are provided by Tyr-351 and Asn-362. Acetyl-CoA contacts are provided by residues Ala-365, 371-372 (NY), Ser-390, Ser-408, and Arg-425.

This sequence in the N-terminal section; belongs to the N-acetylglucosamine-1-phosphate uridyltransferase family. In the C-terminal section; belongs to the transferase hexapeptide repeat family. As to quaternary structure, homotrimer. The cofactor is Mg(2+).

It is found in the cytoplasm. The catalysed reaction is alpha-D-glucosamine 1-phosphate + acetyl-CoA = N-acetyl-alpha-D-glucosamine 1-phosphate + CoA + H(+). It catalyses the reaction N-acetyl-alpha-D-glucosamine 1-phosphate + UTP + H(+) = UDP-N-acetyl-alpha-D-glucosamine + diphosphate. Its pathway is nucleotide-sugar biosynthesis; UDP-N-acetyl-alpha-D-glucosamine biosynthesis; N-acetyl-alpha-D-glucosamine 1-phosphate from alpha-D-glucosamine 6-phosphate (route II): step 2/2. It functions in the pathway nucleotide-sugar biosynthesis; UDP-N-acetyl-alpha-D-glucosamine biosynthesis; UDP-N-acetyl-alpha-D-glucosamine from N-acetyl-alpha-D-glucosamine 1-phosphate: step 1/1. It participates in bacterial outer membrane biogenesis; LPS lipid A biosynthesis. Functionally, catalyzes the last two sequential reactions in the de novo biosynthetic pathway for UDP-N-acetylglucosamine (UDP-GlcNAc). The C-terminal domain catalyzes the transfer of acetyl group from acetyl coenzyme A to glucosamine-1-phosphate (GlcN-1-P) to produce N-acetylglucosamine-1-phosphate (GlcNAc-1-P), which is converted into UDP-GlcNAc by the transfer of uridine 5-monophosphate (from uridine 5-triphosphate), a reaction catalyzed by the N-terminal domain. This Allorhizobium ampelinum (strain ATCC BAA-846 / DSM 112012 / S4) (Agrobacterium vitis (strain S4)) protein is Bifunctional protein GlmU.